Reading from the N-terminus, the 156-residue chain is 3-hydroxyacyl-[acyl-carrier-protein] dehydratase FabZ (156 aa).

H61 is an active-site residue.

This sequence belongs to the thioester dehydratase family. FabZ subfamily.

It localises to the cytoplasm. It catalyses the reaction a (3R)-hydroxyacyl-[ACP] = a (2E)-enoyl-[ACP] + H2O. Involved in unsaturated fatty acids biosynthesis. Catalyzes the dehydration of short chain beta-hydroxyacyl-ACPs and long chain saturated and unsaturated beta-hydroxyacyl-ACPs. This is 3-hydroxyacyl-[acyl-carrier-protein] dehydratase FabZ from Acaryochloris marina (strain MBIC 11017).